The primary structure comprises 369 residues: Serine/threonine-protein kinase srb10 (369 aa).

The Protein kinase domain occupies 5–319 (YKIIGFISSG…AKQALEHVFF (315 aa)). ATP contacts are provided by residues 11–19 (ISSGTYGKV) and Lys-36. Catalysis depends on Asp-140, which acts as the Proton acceptor.

Belongs to the protein kinase superfamily. CMGC Ser/Thr protein kinase family. CDC2/CDKX subfamily. As to quaternary structure, component of the Cdk8 module of the Mediator complex. The Cdk8 module is composed of srb8, srb9, srb10 and srb11. Interacts with med17 and med18.

It localises to the nucleus. The catalysed reaction is L-seryl-[protein] + ATP = O-phospho-L-seryl-[protein] + ADP + H(+). It carries out the reaction L-threonyl-[protein] + ATP = O-phospho-L-threonyl-[protein] + ADP + H(+). It catalyses the reaction [DNA-directed RNA polymerase] + ATP = phospho-[DNA-directed RNA polymerase] + ADP + H(+). In terms of biological role, catalytic component of the Cdk8 module/Srb8-11 module which is a regulatory module of the Mediator complex that regulates basal RNA polymerase II transcription. The Cdk8 module may sterically hinder the interaction between Mediator and RNA polymerase II leading to transcriptional repression of a subset of genes regulated by Mediator. This chain is Serine/threonine-protein kinase srb10 (srb10), found in Schizosaccharomyces pombe (strain 972 / ATCC 24843) (Fission yeast).